We begin with the raw amino-acid sequence, 156 residues long: Cyanate hydratase (156 aa).

Catalysis depends on residues Arg-96, Glu-99, and Ser-122.

The protein belongs to the cyanase family.

It catalyses the reaction cyanate + hydrogencarbonate + 3 H(+) = NH4(+) + 2 CO2. Functionally, catalyzes the reaction of cyanate with bicarbonate to produce ammonia and carbon dioxide. This is Cyanate hydratase from Serratia proteamaculans (strain 568).